The sequence spans 194 residues: Thymidine kinase (194 aa).

ATP contacts are provided by residues 15–22 (GSMFSGKS) and 88–91 (DEVQ). Residue Glu89 is the Proton acceptor of the active site. Residues Cys145, Cys148, Cys183, and Cys186 each coordinate Zn(2+).

This sequence belongs to the thymidine kinase family. As to quaternary structure, homotetramer.

It localises to the cytoplasm. It carries out the reaction thymidine + ATP = dTMP + ADP + H(+). The protein is Thymidine kinase of Bacillus cereus (strain AH820).